The primary structure comprises 460 residues: 4-O-methyl-glucuronoyl methylesterase (460 aa).

The first 17 residues, 1–17, serve as a signal peptide directing secretion; that stretch reads MASRFFALLLLAIPIQA. Position 18 is a pyrrolidone carboxylic acid (glutamine 18). Residues 18–53 form the CBM1 domain; that stretch reads QSPVWGQCGGIGWSGPTTCVGGATCVSYNPYYSQCI. 3 disulfide bridges follow: cysteine 96/cysteine 131, cysteine 277/cysteine 412, and cysteine 309/cysteine 384. The GXSYXG catalytic site motif motif lies at 276–281; the sequence is GCSRNG. The Nucleophile role is filled by serine 278. Substrate is bound by residues lysine 282, glutamine 324, glutamate 332, and tryptophan 375. Histidine 411 serves as the catalytic Proton donor/acceptor. Asparagine 447 is a glycosylation site (N-linked (GlcNAc...) asparagine).

This sequence belongs to the carbohydrate esterase 15 (CE15) family.

Its subcellular location is the secreted. It catalyses the reaction a 4-O-methyl-alpha-D-glucuronosyl ester derivative + H2O = 4-O-methyl-alpha-D-glucuronate derivative + an alcohol + H(+). Glucuronoyl esterase which may play a significant role in biomass degradation, as it is considered to disconnect hemicellulose from lignin through the hydrolysis of the ester bond between 4-O-methyl-D-glucuronic acid residues of glucuronoxylans and aromatic alcohols of lignin. Does not hydrolyze substrates of other carbohydrate esterases such as acetylxylan esterase, acetyl esterase and feruloyl esterase. In Hypocrea jecorina (strain QM6a) (Trichoderma reesei), this protein is 4-O-methyl-glucuronoyl methylesterase.